Consider the following 315-residue polypeptide: Periplasmic [NiFeSe] hydrogenase small subunit (315 aa).

Residues methionine 1–alanine 32 constitute a signal peptide (tat-type signal). 12 residues coordinate [4Fe-4S] cluster: cysteine 50, cysteine 53, cysteine 158, cysteine 196, histidine 240, cysteine 243, cysteine 263, cysteine 269, cysteine 278, cysteine 290, cysteine 296, and cysteine 299.

This sequence belongs to the [NiFe]/[NiFeSe] hydrogenase small subunit family. In terms of assembly, heterodimer of a large and a small subunit. [4Fe-4S] cluster serves as cofactor. Predicted to be exported by the Tat system. The position of the signal peptide cleavage has been experimentally proven.

The protein resides in the periplasm. It carries out the reaction H2 + A = AH2. This is Periplasmic [NiFeSe] hydrogenase small subunit from Desulfomicrobium baculatum (Desulfovibrio baculatus).